Here is a 475-residue protein sequence, read N- to C-terminus: Aspartyl/glutamyl-tRNA(Asn/Gln) amidotransferase subunit B (475 aa).

The protein belongs to the GatB/GatE family. GatB subfamily. Heterotrimer of A, B and C subunits.

The enzyme catalyses L-glutamyl-tRNA(Gln) + L-glutamine + ATP + H2O = L-glutaminyl-tRNA(Gln) + L-glutamate + ADP + phosphate + H(+). The catalysed reaction is L-aspartyl-tRNA(Asn) + L-glutamine + ATP + H2O = L-asparaginyl-tRNA(Asn) + L-glutamate + ADP + phosphate + 2 H(+). Functionally, allows the formation of correctly charged Asn-tRNA(Asn) or Gln-tRNA(Gln) through the transamidation of misacylated Asp-tRNA(Asn) or Glu-tRNA(Gln) in organisms which lack either or both of asparaginyl-tRNA or glutaminyl-tRNA synthetases. The reaction takes place in the presence of glutamine and ATP through an activated phospho-Asp-tRNA(Asn) or phospho-Glu-tRNA(Gln). The protein is Aspartyl/glutamyl-tRNA(Asn/Gln) amidotransferase subunit B of Thiobacillus denitrificans (strain ATCC 25259 / T1).